A 296-amino-acid chain; its full sequence is Pantothenate synthetase (296 aa).

37–44 (MGALHTGH) provides a ligand contact to ATP. H44 (proton donor) is an active-site residue. Position 68 (Q68) interacts with (R)-pantoate. Q68 is a binding site for beta-alanine. ATP is bound at residue 160–163 (GQKD). Residue Q166 participates in (R)-pantoate binding. ATP-binding positions include V189 and 197–200 (TSSR).

It belongs to the pantothenate synthetase family. As to quaternary structure, homodimer.

The protein resides in the cytoplasm. The catalysed reaction is (R)-pantoate + beta-alanine + ATP = (R)-pantothenate + AMP + diphosphate + H(+). It participates in cofactor biosynthesis; (R)-pantothenate biosynthesis; (R)-pantothenate from (R)-pantoate and beta-alanine: step 1/1. Catalyzes the condensation of pantoate with beta-alanine in an ATP-dependent reaction via a pantoyl-adenylate intermediate. This Thermobifida fusca (strain YX) protein is Pantothenate synthetase.